The following is a 635-amino-acid chain: Chaperone protein DnaK (635 aa).

Threonine 198 bears the Phosphothreonine; by autocatalysis mark. Positions 606-635 (QATAASPGAEAPKADDDVVDAEFSEVDENK) are disordered. A compositionally biased stretch (acidic residues) spans 622–635 (DVVDAEFSEVDENK).

This sequence belongs to the heat shock protein 70 family.

Its function is as follows. Acts as a chaperone. The polypeptide is Chaperone protein DnaK (Novosphingobium aromaticivorans (strain ATCC 700278 / DSM 12444 / CCUG 56034 / CIP 105152 / NBRC 16084 / F199)).